The sequence spans 218 residues: Ras-related protein Rab-4A (218 aa).

The GTP site is built by Gly-23, Thr-24, Gly-25, Lys-26, Ser-27, Cys-28, Ser-42, His-44, and Thr-45. Mg(2+) is bound at residue Ser-27. The short motif at 44–49 is the Switch 1 element; sequence HTIGVE. Residues Thr-45 and Asp-68 each coordinate Mg(2+). Residues 70 to 79 carry the Switch 2 motif; it reads AGQERFRSVT. Residue Gly-71 participates in GTP binding. Gln-72 bears the 5-glutamyl serotonin mark. Asn-126, Lys-127, Asp-129, Ala-157, and Leu-158 together coordinate GTP. Ser-190 carries the post-translational modification Phosphoserine. Ser-204 bears the Phosphoserine; by CDK1 mark. S-geranylgeranyl cysteine attachment occurs at residues Cys-216 and Cys-218. Cys-218 carries the post-translational modification Cysteine methyl ester.

Belongs to the small GTPase superfamily. Rab family. In terms of assembly, interacts with SGSM1, SGSM2 and SGSM3. Interacts with RAB11FIP1, RABEP1, ZFYVE20 and RUFY1. Interacts (membrane-bound form) with NDRG1; the interaction involves NDRG1 in vesicular recycling of E-cadherin. Interacts (in GTP-bound form) with GRIPAP1 (via N-terminus). Interacts with RABEP1 and RBSN. Does not interact with HPS4. Does not interact with HPS4. Interacts with RABEP2; this interaction may mediate VEGFR2 cell surface expression. Mg(2+) serves as cofactor. In terms of processing, serotonylation of Gln-72 by TGM2 during activation and aggregation of platelets leads to constitutive activation of GTPase activity. Post-translationally, phosphorylated by CDK1 kinase during mitosis. As to expression, expressed in the central nervous system, including cortex, cerebellum, midbrain and spinal cord, and in the kidney, lung, liver and spleen.

It is found in the membrane. Its subcellular location is the cytoplasm. The protein resides in the early endosome membrane. The protein localises to the recycling endosome membrane. It catalyses the reaction GTP + H2O = GDP + phosphate + H(+). Its activity is regulated as follows. Regulated by guanine nucleotide exchange factors (GEFs) which promote the exchange of bound GDP for free GTP. Regulated by GTPase activating proteins (GAPs) which increase the GTP hydrolysis activity. Inhibited by GDP dissociation inhibitors (GDIs). Its function is as follows. The small GTPases Rab are key regulators of intracellular membrane trafficking, from the formation of transport vesicles to their fusion with membranes. Rabs cycle between an inactive GDP-bound form and an active GTP-bound form that is able to recruit to membranes different sets of downstream effectors directly responsible for vesicle formation, movement, tethering and fusion. RAB4A is involved in protein transport. Also plays a role in vesicular traffic. Mediates VEGFR2 endosomal trafficking to enhance VEGFR2 signaling. Acts as a regulator of platelet alpha-granule release during activation and aggregation of platelets. The chain is Ras-related protein Rab-4A from Mus musculus (Mouse).